The sequence spans 94 residues: Protein canopy homolog 1 (94 aa).

Belongs to the canopy family.

This is Protein canopy homolog 1 (Cnpy1) from Mus musculus (Mouse).